A 306-amino-acid polypeptide reads, in one-letter code: Pseudouridine-5'-phosphate glycosidase (306 aa).

E28 serves as the catalytic Proton donor. Substrate contacts are provided by K89 and V109. Position 139 (D139) interacts with Mn(2+). 141-143 (SAD) is a binding site for substrate. The active-site Nucleophile is K160.

This sequence belongs to the pseudouridine-5'-phosphate glycosidase family. As to quaternary structure, homotrimer. Mn(2+) serves as cofactor.

It carries out the reaction D-ribose 5-phosphate + uracil = psi-UMP + H2O. In terms of biological role, catalyzes the reversible cleavage of pseudouridine 5'-phosphate (PsiMP) to ribose 5-phosphate and uracil. Functions biologically in the cleavage direction, as part of a pseudouridine degradation pathway. The polypeptide is Pseudouridine-5'-phosphate glycosidase (Gemmatimonas aurantiaca (strain DSM 14586 / JCM 11422 / NBRC 100505 / T-27)).